Here is a 461-residue protein sequence, read N- to C-terminus: MADREEHQGLLDGDRDEDEGDKAPSVHLNPICDPNHLLHRILVLIFMCFLGFGSYFCYDNPAALQSQVIQDMNLNTASFMQLYAWYSWPNVVLCFLGGFLLDRVFGIRLGTVIFSLFVLVGQIIFAAGALANHFWLMNVGRFVFGIGGESLAVAQNTYAVNWFKGKELNLVFGLQLSMARLGSTVNMNVIGWVYGRIQMSMGSAGPTTLGITLMIAASTCLFSLICALVLGFLDKRAERILNKEQGKTGEVIKLTDVKDFSVSLWLIFIICVAYYVAIFPFIGLGQVFFIEKFGFTPVQARAINSVVYIISAPASPLLGFLVDKTGRNVMWVMLAVITTLLSHMMLAFTFWNPWIAMSLLGVSYSLLACALWPMVAFVVPEHQLGTAYGFMQSIQNLGLAVMSIAAGSILDVRGYLFLEVFFIACLCMALLAVVLLYLFDYYKEGGLNLSAATRSKRAKPE.

Residues 1–13 (MADREEHQGLLDG) are compositionally biased toward basic and acidic residues. Residues 1-22 (MADREEHQGLLDGDRDEDEGDK) form a disordered region. A Dileucine internalization motif motif is present at residues 10 to 11 (LL). Helical transmembrane passes span 37–57 (LLHRILVLIFMCFLGFGSYFC), 81–101 (QLYAWYSWPNVVLCFLGGFLL), 111–131 (TVIFSLFVLVGQIIFAAGALA), 134–154 (FWLMNVGRFVFGIGGESLAVA), 264–284 (LWLIFIICVAYYVAIFPFIGL), 302–322 (AINSVVYIISAPASPLLGFLV), 331–351 (WVMLAVITTLLSHMMLAFTFW), 359–379 (LLGVSYSLLACALWPMVAFVV), 390–410 (FMQSIQNLGLAVMSIAAGSIL), and 416–436 (LFLEVFFIACLCMALLAVVLL).

Belongs to the major facilitator superfamily. Homodimer. Interacts with lysosomal protein GLMP (via lumenal domain); the interaction starts while both proteins are still in the endoplasmic reticulum and is required for stabilization of MFSD1 in lysosomes but has no direct effect on its targeting to lysosomes or transporter activity.

The protein resides in the lysosome membrane. The enzyme catalyses L-alpha-aminoacyl-L-arginine(out) = L-alpha-aminoacyl-L-arginine(in). It catalyses the reaction L-arginyl-L-alpha-amino acid(out) = L-arginyl-L-alpha-amino acid(in). It carries out the reaction L-arginyl-glycine(out) = L-arginyl-glycine(in). The catalysed reaction is L-alpha-aminoacyl-L-lysine(out) = L-alpha-aminoacyl-L-lysine(in). The enzyme catalyses L-aspartyl-L-lysine(out) = L-aspartyl-L-lysine(in). It catalyses the reaction L-alanyl-L-lysine(out) = L-alanyl-L-lysine(in). It carries out the reaction L-lysyl-L-alpha-amino acid(out) = L-lysyl-L-alpha-amino acid(in). The catalysed reaction is L-lysyl-L-alanine(out) = L-lysyl-L-alanine(in). The enzyme catalyses L-lysyl-L-lysine(out) = L-lysyl-L-lysine(in). It catalyses the reaction L-lysyl-glycine(out) = L-lysyl-glycine(in). It carries out the reaction L-alpha-aminoacyl-L-histidine(out) = L-alpha-aminoacyl-L-histidine(in). The catalysed reaction is L-histidyl-L-alpha-amino acid(out) = L-histidyl-L-alpha-amino acid(in). The enzyme catalyses L-histidyl-glycine(out) = L-histidyl-glycine(in). Lysosomal dipeptide uniporter that selectively exports lysine, arginine or histidine-containing dipeptides with a net positive charge from the lysosome lumen into the cytosol. Could play a role in a specific type of protein O-glycosylation indirectly regulating macrophages migration and tissue invasion. Also essential for liver homeostasis. The protein is Lysosomal dipeptide transporter MFSD1 (mfsd1) of Danio rerio (Zebrafish).